An 802-amino-acid polypeptide reads, in one-letter code: E3 ubiquitin-protein ligase UHRF2 (802 aa).

The 78-residue stretch at 1-78 folds into the Ubiquitin-like domain; it reads MWIQVRTIDG…IQLLVRPDPD (78 aa). Disordered regions lie at residues 80–116 and 153–197; these read LPGT…TSAR and RASD…STSN. Polar residues-rich tracts occupy residues 82–96, 153–177, and 188–197; these read GTST…SNSP, RASD…TNGN, and KLDSVPSTSN. The segment at 117-311 is required for interaction with histone H3; it reads ARLIDPGFGI…VDEIFKIERP (195 aa). The tract at residues 194–288 is interaction with PCNP; sequence STSNSDCVAA…KELRVKIFLG (95 aa). A PHD-type zinc finger spans residues 344 to 395; sequence SCSCRVCGGKHEPNMQLLCDECNVAYHIYCLNPPLDKVPEEEYWYCPSCKTD. The tract at residues 414-644 is methyl-CpG binding and interaction with HDAC1; sequence KMPSASTESR…LQYPAGYPSD (231 aa). Residues 448–612 form the YDG domain; sequence GPIPGIPVGS…FLVWRYLLRR (165 aa). Residues 640 to 674 form a disordered region; that stretch reads GYPSDKEGKKPKGQSKKQPSGTTKRPISDDDCPSA. Position 667 is a phosphoserine (Ser667). The RING-type zinc finger occupies 733–772; it reads CVCCQELVYQPVTTECFHNVCKDCLQRSFKAQVFSCPACR.

In terms of assembly, homodimer; disulfide-linked. Binds methylated CpG containing oligonucleotides. Interacts with H3; the interaction has a preference for the 'Lys-9' trimethylated form of H3 (H3K9me3). Interacts with PCNP. Interacts with HDAC1. Interacts directly with CCNE1; the interaction ubiquitinates CCNE1 and appears independent of CCNE1 phosphorylation. Interacts with CCND1; the interaction ubiquitinates CCND1 and appears independent of CCND1 phosphorylation. Interacts with p53/TP53 and RB1. Interacts with UBE2I. Interacts with ZNF618. Interacts with UHRF1. Interacts with FANCD2. Interacts with ATR. Interacts with PCNA. May be autoubiquitinated; which may lead to proteasomal degradation. In terms of processing, phosphorylated. Phosphorylation may be mediated by CDK2. Post-translationally, autosumoylated.

It localises to the nucleus. The protein localises to the chromosome. It catalyses the reaction S-ubiquitinyl-[E2 ubiquitin-conjugating enzyme]-L-cysteine + [acceptor protein]-L-lysine = [E2 ubiquitin-conjugating enzyme]-L-cysteine + N(6)-ubiquitinyl-[acceptor protein]-L-lysine.. Its pathway is protein modification; protein ubiquitination. Its activity is regulated as follows. E3 ligase activity is robustly activated by 5-hydroxymethylcytosine. Its function is as follows. E3 ubiquitin ligase that plays important roles in DNA methylation, histone modifications, cell cycle and DNA repair. Acts as a specific reader for 5-hydroxymethylcytosine (5hmC) and thereby recruits various substrates to these sites to ubiquitinate them. This activity also allows the maintenance of 5mC levels at specific genomic loci and regulates neuron-related gene expression. Participates in cell cycle regulation by ubiquitinating cyclins CCND1 and CCNE1 and thereby inducing G1 arrest. Also ubiquitinates PCNP leading to its degradation by the proteasome. Plays an active role in DNA damage repair by ubiquitinating p21/CDKN1A leading to its proteasomal degradation. Also promotes DNA repair by acting as an interstrand cross-links (ICLs) sensor. Mechanistically, cooperates with UHRF1 to ensure recruitment of FANCD2 to ICLs, leading to FANCD2 monoubiquitination and subsequent activation. Contributes to UV-induced DNA damage response by physically interacting with ATR in response to irradiation, thereby promoting ATR activation. This is E3 ubiquitin-protein ligase UHRF2 (UHRF2) from Homo sapiens (Human).